Reading from the N-terminus, the 334-residue chain is Formamidase (334 aa).

Residues 14–260 (FLVAAIQFPV…WEIVTGEIYP (247 aa)) enclose the CN hydrolase domain. The active-site Proton acceptor is the Glu60. Residue Lys133 is the Proton donor of the active site. Cys166 (nucleophile) is an active-site residue.

This sequence belongs to the carbon-nitrogen hydrolase superfamily. Aliphatic amidase family.

It catalyses the reaction formamide + H2O = formate + NH4(+). Its function is as follows. Is an aliphatic amidase with a restricted substrate specificity, as it only hydrolyzes formamide. This chain is Formamidase, found in Helicobacter pylori (strain G27).